Here is a 376-residue protein sequence, read N- to C-terminus: Homeobox protein extradenticle (376 aa).

The interval 1-37 is disordered; the sequence is MEDPNRMLAHTGGMMAPQGYGLSGQDDGQNAGSENEV. A PBC domain is found at 38 to 237; it reads RKQKDIGEIL…VMILRSRFLD (200 aa). A PBC-A region spans residues 45-124; sequence EILQQIMSIS…EGVAGPEKGG (80 aa). Residues 127-237 are PBC-B; sequence AAAASAAAAS…VMILRSRFLD (111 aa). The segment at residues 238-300 is a DNA-binding region (homeobox; TALE-type); sequence ARRKRRNFSK…NKRIRYKKNI (63 aa). Low complexity predominate over residues 318 to 335; that stretch reads ASPYSMAGPPSGTTTPMM. The disordered stretch occupies residues 318–376; the sequence is ASPYSMAGPPSGTTTPMMSPAPPQDSMGYPMGSGGYDQQQPYDNSMGGYDPNLHQDLSP.

It belongs to the TALE/PBX homeobox family. In terms of assembly, interacts with Ubx and hth. Prior to full germband retraction it is ubiquitously present, after germband retraction, mostly present in the anterior portion of the ventral nerve cord.

The protein localises to the nucleus. In terms of biological role, transcription factor which acts with the selector homeodomain proteins altering the regulation of downstream target genes such as wingless (wg), teashirt (tsh) and decapentaplegic (dpp), thus affecting segmental identity. Delimits the eye field and prevent inappropriate eye development. Required for proper localization of chordotonal organs within the peripheral nervous system. The protein is Homeobox protein extradenticle (exd) of Drosophila melanogaster (Fruit fly).